Here is a 200-residue protein sequence, read N- to C-terminus: Holliday junction branch migration complex subunit RuvA (200 aa).

Positions Met1 to Ser64 are domain I. Positions Ser65–Thr143 are domain II. Positions Pro144–Glu154 are flexible linker. The interval Glu154–Arg200 is domain III.

The protein belongs to the RuvA family. As to quaternary structure, homotetramer. Forms an RuvA(8)-RuvB(12)-Holliday junction (HJ) complex. HJ DNA is sandwiched between 2 RuvA tetramers; dsDNA enters through RuvA and exits via RuvB. An RuvB hexamer assembles on each DNA strand where it exits the tetramer. Each RuvB hexamer is contacted by two RuvA subunits (via domain III) on 2 adjacent RuvB subunits; this complex drives branch migration. In the full resolvosome a probable DNA-RuvA(4)-RuvB(12)-RuvC(2) complex forms which resolves the HJ.

The protein resides in the cytoplasm. The RuvA-RuvB-RuvC complex processes Holliday junction (HJ) DNA during genetic recombination and DNA repair, while the RuvA-RuvB complex plays an important role in the rescue of blocked DNA replication forks via replication fork reversal (RFR). RuvA specifically binds to HJ cruciform DNA, conferring on it an open structure. The RuvB hexamer acts as an ATP-dependent pump, pulling dsDNA into and through the RuvAB complex. HJ branch migration allows RuvC to scan DNA until it finds its consensus sequence, where it cleaves and resolves the cruciform DNA. This is Holliday junction branch migration complex subunit RuvA from Chlorobium luteolum (strain DSM 273 / BCRC 81028 / 2530) (Pelodictyon luteolum).